We begin with the raw amino-acid sequence, 376 residues long: Lipoyl synthase 1, chloroplastic (376 aa).

The span at methionine 1 to leucine 13 shows a compositional bias: polar residues. 2 disordered regions span residues methionine 1 to serine 25 and isoleucine 47 to valine 75. Residues methionine 1–arginine 35 constitute a chloroplast transit peptide. The [4Fe-4S] cluster site is built by cysteine 107, cysteine 112, cysteine 118, cysteine 138, cysteine 142, cysteine 145, and serine 353. Residues glycine 121–arginine 342 enclose the Radical SAM core domain.

Belongs to the radical SAM superfamily. Lipoyl synthase family. The cofactor is [4Fe-4S] cluster.

Its subcellular location is the plastid. It is found in the chloroplast. It catalyses the reaction [[Fe-S] cluster scaffold protein carrying a second [4Fe-4S](2+) cluster] + N(6)-octanoyl-L-lysyl-[protein] + 2 oxidized [2Fe-2S]-[ferredoxin] + 2 S-adenosyl-L-methionine + 4 H(+) = [[Fe-S] cluster scaffold protein] + N(6)-[(R)-dihydrolipoyl]-L-lysyl-[protein] + 4 Fe(3+) + 2 hydrogen sulfide + 2 5'-deoxyadenosine + 2 L-methionine + 2 reduced [2Fe-2S]-[ferredoxin]. Its pathway is protein modification; protein lipoylation via endogenous pathway; protein N(6)-(lipoyl)lysine from octanoyl-[acyl-carrier-protein]: step 2/2. Catalyzes the radical-mediated insertion of two sulfur atoms into the C-6 and C-8 positions of the octanoyl moiety bound to the lipoyl domains of lipoate-dependent enzymes, thereby converting the octanoylated domains into lipoylated derivatives. This chain is Lipoyl synthase 1, chloroplastic, found in Populus trichocarpa (Western balsam poplar).